A 359-amino-acid chain; its full sequence is Protein RecA (359 aa).

64–71 (GHESSGKT) contributes to the ATP binding site. Residues 329-359 (KYSNKDSNDSPKEGSKIKTKVNPAVTQDELI) form a disordered region. A compositionally biased stretch (basic and acidic residues) spans 331–344 (SNKDSNDSPKEGSK).

This sequence belongs to the RecA family.

It is found in the cytoplasm. Its function is as follows. Can catalyze the hydrolysis of ATP in the presence of single-stranded DNA, the ATP-dependent uptake of single-stranded DNA by duplex DNA, and the ATP-dependent hybridization of homologous single-stranded DNAs. It interacts with LexA causing its activation and leading to its autocatalytic cleavage. The sequence is that of Protein RecA from Francisella tularensis subsp. tularensis (strain FSC 198).